We begin with the raw amino-acid sequence, 277 residues long: Probable endonuclease 4 (277 aa).

Residues histidine 67, histidine 107, glutamate 141, aspartate 173, histidine 176, histidine 207, aspartate 220, histidine 222, and glutamate 252 each contribute to the Zn(2+) site.

It belongs to the AP endonuclease 2 family. Requires Zn(2+) as cofactor.

The catalysed reaction is Endonucleolytic cleavage to 5'-phosphooligonucleotide end-products.. In terms of biological role, endonuclease IV plays a role in DNA repair. It cleaves phosphodiester bonds at apurinic or apyrimidinic (AP) sites, generating a 3'-hydroxyl group and a 5'-terminal sugar phosphate. This is Probable endonuclease 4 from Finegoldia magna (strain ATCC 29328 / DSM 20472 / WAL 2508) (Peptostreptococcus magnus).